Here is a 609-residue protein sequence, read N- to C-terminus: UvrABC system protein C (609 aa).

The GIY-YIG domain occupies Ser16–Val94. The UVR domain occupies Gln203–Val238.

It belongs to the UvrC family. As to quaternary structure, interacts with UvrB in an incision complex.

It is found in the cytoplasm. Functionally, the UvrABC repair system catalyzes the recognition and processing of DNA lesions. UvrC both incises the 5' and 3' sides of the lesion. The N-terminal half is responsible for the 3' incision and the C-terminal half is responsible for the 5' incision. The sequence is that of UvrABC system protein C from Shewanella piezotolerans (strain WP3 / JCM 13877).